A 237-amino-acid chain; its full sequence is Ribonuclease PH (237 aa).

Phosphate contacts are provided by residues arginine 86 and 124–126 (GTR).

It belongs to the RNase PH family. Homohexameric ring arranged as a trimer of dimers.

It carries out the reaction tRNA(n+1) + phosphate = tRNA(n) + a ribonucleoside 5'-diphosphate. In terms of biological role, phosphorolytic 3'-5' exoribonuclease that plays an important role in tRNA 3'-end maturation. Removes nucleotide residues following the 3'-CCA terminus of tRNAs; can also add nucleotides to the ends of RNA molecules by using nucleoside diphosphates as substrates, but this may not be physiologically important. Probably plays a role in initiation of 16S rRNA degradation (leading to ribosome degradation) during starvation. In Bradyrhizobium diazoefficiens (strain JCM 10833 / BCRC 13528 / IAM 13628 / NBRC 14792 / USDA 110), this protein is Ribonuclease PH.